The chain runs to 623 residues: Transketolase (623 aa).

M1 bears the N-acetylmethionine mark. An N6-acetyllysine mark is found at K6 and K11. H37 contacts substrate. Thiamine diphosphate-binding residues include S40 and H77. Phosphoserine is present on S104. 123–125 (GSL) serves as a coordination point for thiamine diphosphate. Residue K144 is modified to N6-acetyllysine. A Mg(2+)-binding site is contributed by D155. The thiamine diphosphate site is built by G156 and N185. Positions 185 and 187 each coordinate Mg(2+). An N6-acetyllysine mark is found at K204, K232, and K241. Thiamine diphosphate contacts are provided by K244 and H258. H258 contacts substrate. At K260 the chain carries N6-acetyllysine. Position 275 is a phosphotyrosine (Y275). T287 carries the phosphothreonine modification. Residue S295 is modified to Phosphoserine. Residue R318 coordinates substrate. Residue K352 forms a Glycyl lysine isopeptide (Lys-Gly) (interchain with G-Cter in SUMO2) linkage. Catalysis depends on E366, which acts as the Proton donor. F392 contacts thiamine diphosphate. Residues H416 and D424 each contribute to the substrate site. Q428 provides a ligand contact to thiamine diphosphate. R474 contributes to the substrate binding site. An N6-acetyllysine mark is found at K538 and K603.

This sequence belongs to the transketolase family. In terms of assembly, homodimer. The cofactor is Mg(2+). It depends on Ca(2+) as a cofactor. Requires Mn(2+) as cofactor. Co(2+) is required as a cofactor. Thiamine diphosphate serves as cofactor.

It catalyses the reaction D-sedoheptulose 7-phosphate + D-glyceraldehyde 3-phosphate = aldehydo-D-ribose 5-phosphate + D-xylulose 5-phosphate. Functionally, catalyzes the transfer of a two-carbon ketol group from a ketose donor to an aldose acceptor, via a covalent intermediate with the cofactor thiamine pyrophosphate. This Pongo abelii (Sumatran orangutan) protein is Transketolase (TKT).